Here is a 956-residue protein sequence, read N- to C-terminus: Zinc protease PQQL-like (956 aa).

M1 is modified (N-acetylmethionine). H85 contributes to the Zn(2+) binding site. Residue E88 is the Proton acceptor of the active site. H89 is a Zn(2+) binding site. E165 is an active-site residue. E172 serves as a coordination point for Zn(2+).

It belongs to the peptidase M16 family. It depends on Zn(2+) as a cofactor.

The polypeptide is Zinc protease PQQL-like (Arabidopsis thaliana (Mouse-ear cress)).